We begin with the raw amino-acid sequence, 643 residues long: Threonine--tRNA ligase (643 aa).

The region spanning 1–62 is the TGS domain; sequence MSFSVTLPDG…DEDVEAAIIT (62 aa). The interval 239-537 is catalytic; that stretch reads DHRTIGRDLD…LTEIYKGAFP (299 aa). Positions 333, 384, and 514 each coordinate Zn(2+).

The protein belongs to the class-II aminoacyl-tRNA synthetase family. As to quaternary structure, homodimer. Zn(2+) serves as cofactor.

The protein localises to the cytoplasm. It carries out the reaction tRNA(Thr) + L-threonine + ATP = L-threonyl-tRNA(Thr) + AMP + diphosphate + H(+). Catalyzes the attachment of threonine to tRNA(Thr) in a two-step reaction: L-threonine is first activated by ATP to form Thr-AMP and then transferred to the acceptor end of tRNA(Thr). Also edits incorrectly charged L-seryl-tRNA(Thr). The chain is Threonine--tRNA ligase from Lactobacillus gasseri (strain ATCC 33323 / DSM 20243 / BCRC 14619 / CIP 102991 / JCM 1131 / KCTC 3163 / NCIMB 11718 / NCTC 13722 / AM63).